The following is a 357-amino-acid chain: MPQTLHVHSRVKDYDILFTNHVLKTLADCLGERKQRKLLFITDQTVYHLYQTLFEEFAQQYNAFVHVCPPGGQSKSLERVSAIYDQLIAENFSKKDMIVTIGGGVVGDLGGFVAATYYRGIPYIQIPTTLLSQVDSSIGGKVGVHFKGLTNMIGSIYPPEAIIISTTFLETLPQREFSCGISEMLKIGFIHDRPLFQQLRDFQKETDKQGLERLIYQSISNKKRIVEQDEFENGLRMSLNFGHTLGHAIESLCHHDFYHHGEAIAIGMVVDAKLAVSKGLLPKEDLDSLLQVFERYQLPTTLERADVSATSLFDVFKTDKKNSEQHIIFILPTETGFTTLAINKDDHQFVEKLDSLL.

Residues 104–108 (GVVGD), 128–129 (TT), Lys141, and 168–171 (FLET) each bind NAD(+). Zn(2+)-binding residues include Glu183, His243, and His260.

This sequence belongs to the sugar phosphate cyclases superfamily. Dehydroquinate synthase family. Co(2+) serves as cofactor. It depends on Zn(2+) as a cofactor. NAD(+) is required as a cofactor.

The protein localises to the cytoplasm. The enzyme catalyses 7-phospho-2-dehydro-3-deoxy-D-arabino-heptonate = 3-dehydroquinate + phosphate. Its pathway is metabolic intermediate biosynthesis; chorismate biosynthesis; chorismate from D-erythrose 4-phosphate and phosphoenolpyruvate: step 2/7. In terms of biological role, catalyzes the conversion of 3-deoxy-D-arabino-heptulosonate 7-phosphate (DAHP) to dehydroquinate (DHQ). The polypeptide is 3-dehydroquinate synthase (Streptococcus pyogenes serotype M5 (strain Manfredo)).